Here is a 304-residue protein sequence, read N- to C-terminus: MKKKILFWILGIIGIMIIGGGVYAYNVYSSVSKTLDEVHKPLKRDKDSNGVETAKISKSEPVSILLLGADERGEDKGRSDSLMVITLNPKNNSMKTVSIPRDTYTEIVGKGKSDKINHAYAFGGVDMSVATVEKFLSVPINYYIEVNMEGFKDIVDAVGGVDVNNDLEFTANGHHFAKGNVHLTGDQALAFTRMRKEDPRGDFGRQMRQRQVMQAVIKKGASFSSLSSYGDVLTAIQKNVKTNLTQDQMFDMQKNYKNCLQNSEEIQIPGDGHKAADGIWYYYVPDAAKQDITNKLRAHLELTK.

The Cytoplasmic portion of the chain corresponds to 1-4 (MKKK). A helical; Signal-anchor for type II membrane protein transmembrane segment spans residues 5 to 25 (ILFWILGIIGIMIIGGGVYAY). The Extracellular segment spans residues 26–304 (NVYSSVSKTL…KLRAHLELTK (279 aa)).

It belongs to the LytR/CpsA/Psr (LCP) family.

It localises to the cell membrane. The protein operates within cell wall biogenesis. May catalyze the final step in cell wall teichoic acid biosynthesis, the transfer of the anionic cell wall polymers (APs) from their lipid-linked precursor to the cell wall peptidoglycan (PG). This chain is Polyisoprenyl-teichoic acid--peptidoglycan teichoic acid transferase TagU, found in Bacillus mycoides (strain KBAB4) (Bacillus weihenstephanensis).